A 105-amino-acid chain; its full sequence is Large ribosomal subunit protein uL24 (105 aa).

The protein belongs to the universal ribosomal protein uL24 family. Part of the 50S ribosomal subunit.

In terms of biological role, one of two assembly initiator proteins, it binds directly to the 5'-end of the 23S rRNA, where it nucleates assembly of the 50S subunit. Its function is as follows. One of the proteins that surrounds the polypeptide exit tunnel on the outside of the subunit. In Mycobacterium tuberculosis (strain CDC 1551 / Oshkosh), this protein is Large ribosomal subunit protein uL24.